A 473-amino-acid polypeptide reads, in one-letter code: Ribonuclease Y (473 aa).

A helical transmembrane segment spans residues 4 to 24; it reads LIAFIILLILFVLLITIVPVV. Positions 158–218 constitute a KH domain; that stretch reads SLFNIDIIDE…IRREIARIVM (61 aa). An HD domain is found at 285-378; that stretch reads ILSHSLEVAE…VKIVDTLSAA (94 aa).

This sequence belongs to the RNase Y family.

Its subcellular location is the cell membrane. Its function is as follows. Endoribonuclease that initiates mRNA decay. The protein is Ribonuclease Y of Ureaplasma parvum serovar 3 (strain ATCC 27815 / 27 / NCTC 11736).